Reading from the N-terminus, the 317-residue chain is Transaldolase (317 aa).

The active-site Schiff-base intermediate with substrate is the Lys-126.

Belongs to the transaldolase family. Type 1 subfamily. Homodimer.

It is found in the cytoplasm. The enzyme catalyses D-sedoheptulose 7-phosphate + D-glyceraldehyde 3-phosphate = D-erythrose 4-phosphate + beta-D-fructose 6-phosphate. Its pathway is carbohydrate degradation; pentose phosphate pathway; D-glyceraldehyde 3-phosphate and beta-D-fructose 6-phosphate from D-ribose 5-phosphate and D-xylulose 5-phosphate (non-oxidative stage): step 2/3. Transaldolase is important for the balance of metabolites in the pentose-phosphate pathway. In Burkholderia mallei (strain SAVP1), this protein is Transaldolase.